The chain runs to 275 residues: Glutamate racemase (275 aa).

Substrate-binding positions include 12–13 (DS) and 44–45 (YG). Residue C75 is the Proton donor/acceptor of the active site. Residue 76 to 77 (NT) coordinates substrate. C185 serves as the catalytic Proton donor/acceptor. Residue 186–187 (TH) coordinates substrate.

Belongs to the aspartate/glutamate racemases family.

It catalyses the reaction L-glutamate = D-glutamate. The protein operates within cell wall biogenesis; peptidoglycan biosynthesis. Its function is as follows. Provides the (R)-glutamate required for cell wall biosynthesis. The chain is Glutamate racemase from Mycobacterium avium (strain 104).